A 516-amino-acid chain; its full sequence is Methionine--tRNA ligase (516 aa).

Positions 14-24 match the 'HIGH' region motif; the sequence is SYPNGKPHIGH. The 'KMSKS' region motif lies at 302-306; the sequence is KMSKS. Lys305 contributes to the ATP binding site.

It belongs to the class-I aminoacyl-tRNA synthetase family. MetG type 2B subfamily. Monomer.

Its subcellular location is the cytoplasm. The enzyme catalyses tRNA(Met) + L-methionine + ATP = L-methionyl-tRNA(Met) + AMP + diphosphate. Functionally, is required not only for elongation of protein synthesis but also for the initiation of all mRNA translation through initiator tRNA(fMet) aminoacylation. This is Methionine--tRNA ligase from Rhizobium meliloti (strain 1021) (Ensifer meliloti).